The primary structure comprises 209 residues: Kynurenine formamidase (209 aa).

A substrate-binding site is contributed by tryptophan 20. The Zn(2+) site is built by histidine 50, histidine 54, and aspartate 56. Residue histidine 60 is the Proton donor/acceptor of the active site. Residues histidine 161 and glutamate 173 each coordinate Zn(2+).

It belongs to the Cyclase 1 superfamily. KynB family. Homodimer. Requires Zn(2+) as cofactor.

The enzyme catalyses N-formyl-L-kynurenine + H2O = L-kynurenine + formate + H(+). It functions in the pathway amino-acid degradation; L-tryptophan degradation via kynurenine pathway; L-kynurenine from L-tryptophan: step 2/2. Its function is as follows. Catalyzes the hydrolysis of N-formyl-L-kynurenine to L-kynurenine, the second step in the kynurenine pathway of tryptophan degradation. The sequence is that of Kynurenine formamidase from Bacillus thuringiensis (strain Al Hakam).